The sequence spans 114 residues: Large ribosomal subunit protein uL22 (114 aa).

The protein belongs to the universal ribosomal protein uL22 family. Part of the 50S ribosomal subunit.

Its function is as follows. This protein binds specifically to 23S rRNA; its binding is stimulated by other ribosomal proteins, e.g. L4, L17, and L20. It is important during the early stages of 50S assembly. It makes multiple contacts with different domains of the 23S rRNA in the assembled 50S subunit and ribosome. Functionally, the globular domain of the protein is located near the polypeptide exit tunnel on the outside of the subunit, while an extended beta-hairpin is found that lines the wall of the exit tunnel in the center of the 70S ribosome. This Desulfitobacterium hafniense (strain Y51) protein is Large ribosomal subunit protein uL22.